The sequence spans 313 residues: Ribose 1,5-bisphosphate isomerase (313 aa).

Substrate contacts are provided by residues 17–20 and R57; that span reads RGAA. C121 functions as the Proton acceptor in the catalytic mechanism. D190 acts as the Proton donor in catalysis. Residues 200-201 and K226 contribute to the substrate site; that span reads NK.

Belongs to the eIF-2B alpha/beta/delta subunits family. R15P isomerase subfamily.

The catalysed reaction is alpha-D-ribose 1,5-bisphosphate = D-ribulose 1,5-bisphosphate. Catalyzes the isomerization of ribose 1,5-bisphosphate (R15P) to ribulose 1,5-bisphosphate (RuBP), the CO(2) acceptor and substrate for RubisCO. Functions in an archaeal AMP degradation pathway, together with AMP phosphorylase and RubisCO. This chain is Ribose 1,5-bisphosphate isomerase, found in Archaeoglobus fulgidus (strain ATCC 49558 / DSM 4304 / JCM 9628 / NBRC 100126 / VC-16).